Here is a 25-residue protein sequence, read N- to C-terminus: Secapin-1 (25 aa).

The cysteines at positions 9 and 20 are disulfide-linked.

As to expression, expressed by the venom gland.

The protein resides in the secreted. Its function is as follows. Serine protease inhibitor which exhibits antifibrinolytic, antielastolytic and antimicrobial activities. Displays antimicrobial activity against bacteria and fungi. Likely functions in the innate immune response to microbial infection and possibly in the venom, as an antifibrinolytic agent. This is Secapin-1 from Apis mellifera (Honeybee).